Consider the following 283-residue polypeptide: Elongation factor Ts (283 aa).

Positions 84-87 (TDFV) are involved in Mg(2+) ion dislocation from EF-Tu.

It belongs to the EF-Ts family.

The protein localises to the cytoplasm. Functionally, associates with the EF-Tu.GDP complex and induces the exchange of GDP to GTP. It remains bound to the aminoacyl-tRNA.EF-Tu.GTP complex up to the GTP hydrolysis stage on the ribosome. The sequence is that of Elongation factor Ts from Bifidobacterium longum subsp. infantis (strain ATCC 15697 / DSM 20088 / JCM 1222 / NCTC 11817 / S12).